A 332-amino-acid chain; its full sequence is Ketol-acid reductoisomerase (NAD(+)) (332 aa).

The 186-residue stretch at 1 to 186 folds into the KARI N-terminal Rossmann domain; it reads MEILHDEDVD…HWTKAGILEC (186 aa). NAD(+) is bound by residues 24–27, Glu46, Asn55, Ser57, and 87–90; these read YGAQ and DEVQ. His112 is a catalytic residue. Residue Gly138 coordinates NAD(+). Positions 187–332 constitute a KARI C-terminal knotted domain; sequence TFEQETYEDL…AEIRKLFAQK (146 aa). Asp195, Glu199, Glu231, and Glu235 together coordinate Mg(2+). Residue Ser256 coordinates substrate.

It belongs to the ketol-acid reductoisomerase family. In terms of assembly, homodimer. It depends on Mg(2+) as a cofactor.

It catalyses the reaction (2R)-2,3-dihydroxy-3-methylbutanoate + NAD(+) = (2S)-2-acetolactate + NADH + H(+). It participates in amino-acid biosynthesis; L-isoleucine biosynthesis; L-isoleucine from 2-oxobutanoate: step 2/4. Its pathway is amino-acid biosynthesis; L-valine biosynthesis; L-valine from pyruvate: step 2/4. Functionally, involved in the biosynthesis of branched-chain amino acids (BCAA). Catalyzes an alkyl-migration followed by a ketol-acid reduction of (S)-2-acetolactate (S2AL) to yield (R)-2,3-dihydroxy-isovalerate. In the isomerase reaction, S2AL is rearranged via a Mg-dependent methyl migration to produce 3-hydroxy-3-methyl-2-ketobutyrate (HMKB). In the reductase reaction, this 2-ketoacid undergoes a metal-dependent reduction by NADH to yield (R)-2,3-dihydroxy-isovalerate. In Uncultured archaeon GZfos26G2, this protein is Ketol-acid reductoisomerase (NAD(+)).